Consider the following 191-residue polypeptide: MKDRQDYYYWKAKKEGYRSRAAYKLLQMNRTFKLIREGDLVLDLGATPGGWSQVAALLGARVVAVDINPMKPLENVTFIRGDITLPETLEKIREISPDYDVVMSDASPKISGKWTIDHLRSIDLARASFSIAKEVLKPGGNFVVKVFQGEEIQKFFNELKPHFRFKKFHSPQASRKRSAEVYFIGKRFRKI.

S-adenosyl-L-methionine is bound by residues glycine 49, tryptophan 51, aspartate 66, aspartate 82, and aspartate 105. The active-site Proton acceptor is lysine 145.

The protein belongs to the class I-like SAM-binding methyltransferase superfamily. RNA methyltransferase RlmE family.

The protein localises to the cytoplasm. The enzyme catalyses uridine(2552) in 23S rRNA + S-adenosyl-L-methionine = 2'-O-methyluridine(2552) in 23S rRNA + S-adenosyl-L-homocysteine + H(+). Functionally, specifically methylates the uridine in position 2552 of 23S rRNA at the 2'-O position of the ribose in the fully assembled 50S ribosomal subunit. The chain is Ribosomal RNA large subunit methyltransferase E from Archaeoglobus fulgidus (strain ATCC 49558 / DSM 4304 / JCM 9628 / NBRC 100126 / VC-16).